The following is a 239-amino-acid chain: MNIEQFQSMLEEKGISLSSRQLEQFGIYFETLVEWNEKMNLTAITEKEEVYLKHFFDSVTAAFYYDFSKPFSICDVGAGAGFPSIPLKICFPHLKVKIVDSLQKRINFLNHLAQKLELSDVAFCHDRAETFGKKEGVREAYDIVMARAVARLSVLSELCLPLVKVGGTFIAMKGAAANEEIENGKYALEVLGGELKEMSTFQLPFEESERNILLIEKKRKTPKKYPRKPGTPNKLPIEK.

S-adenosyl-L-methionine-binding positions include Gly77, Phe82, 128–129, and Arg147; that span reads AE.

Belongs to the methyltransferase superfamily. RNA methyltransferase RsmG family.

Its subcellular location is the cytoplasm. Its function is as follows. Specifically methylates the N7 position of guanine in position 535 of 16S rRNA. The polypeptide is Ribosomal RNA small subunit methyltransferase G (Bacillus mycoides (strain KBAB4) (Bacillus weihenstephanensis)).